The chain runs to 344 residues: Protein-glutamate methylesterase/protein-glutamine glutaminase 1 (344 aa).

Positions arginine 5–valine 122 constitute a Response regulatory domain. Position 56 is a 4-aspartylphosphate (aspartate 56). One can recognise a CheB-type methylesterase domain in the interval phenylalanine 151–arginine 343. Active-site residues include serine 163, histidine 189, and aspartate 285.

The protein belongs to the CheB family. In terms of processing, phosphorylated by CheA. Phosphorylation of the N-terminal regulatory domain activates the methylesterase activity.

It localises to the cytoplasm. The enzyme catalyses [protein]-L-glutamate 5-O-methyl ester + H2O = L-glutamyl-[protein] + methanol + H(+). It catalyses the reaction L-glutaminyl-[protein] + H2O = L-glutamyl-[protein] + NH4(+). Functionally, involved in chemotaxis. Part of a chemotaxis signal transduction system that modulates chemotaxis in response to various stimuli. Catalyzes the demethylation of specific methylglutamate residues introduced into the chemoreceptors (methyl-accepting chemotaxis proteins or MCP) by CheR. Also mediates the irreversible deamidation of specific glutamine residues to glutamic acid. This Caulobacter vibrioides (strain ATCC 19089 / CIP 103742 / CB 15) (Caulobacter crescentus) protein is Protein-glutamate methylesterase/protein-glutamine glutaminase 1.